A 753-amino-acid chain; its full sequence is Replication restart protein PriA (753 aa).

The region spanning 228–395 (SLITTKFQTC…LSKKYTLSVL (168 aa)) is the Helicase ATP-binding domain. 241–248 (GVTGSGKT) is an ATP binding site. The DEAH box signature appears at 337-340 (DEEH). Residues Cys-458, Cys-461, Cys-467, Cys-470, Cys-485, Cys-488, Cys-499, and Cys-502 each contribute to the Zn(2+) site. The region spanning 491–646 (RLSKPITSCP…DFPAFYKEEI (156 aa)) is the Helicase C-terminal domain.

The protein belongs to the helicase family. PriA subfamily. Component of the replication restart primosome. Zn(2+) is required as a cofactor.

The catalysed reaction is Couples ATP hydrolysis with the unwinding of duplex DNA by translocating in the 3'-5' direction.. It carries out the reaction ATP + H2O = ADP + phosphate + H(+). Its function is as follows. Initiates the restart of stalled replication forks, which reloads the replicative helicase on sites other than the origin of replication. Recognizes and binds to abandoned replication forks and remodels them to uncover a helicase loading site. Promotes assembly of the primosome at these replication forks. In Chlamydia muridarum (strain MoPn / Nigg), this protein is Replication restart protein PriA.